We begin with the raw amino-acid sequence, 625 residues long: MNSKTPTLGIVCSEGTISLSLEEGFEFVGVPLSGEGLKLRVEALAPSERLQEFLDDEVAYHPEENVHKVVGLSSAWLELDSEDTLIADRSEEVLLKEASYASYCGLSSIILNGPTSPMNVMRYARAVSSALNSTMNLKFLVQLAIESGHEDYFETWKMWDTIRSACGYHPRLKVALELPPACSPPIELVNRWYAEPIEMITMSCMAFVPNPNGYPVLGRKLRAIYALYLRLNPRILLWDNDAPEKIGDSPDYSIYMKHLFDSQPPAPLVEDLADSYKDYLQVPLQPLSYNLENITYEIFERDPVKYAQYEQAIFSALMDRDESSVTRIAVVGAGRGPLVDCALRAAISSSRTVDMIALEKNPNAFSMLLMRNRQDWAGKVTLVFGDMRTWNPDYKIDILVSELLGSMGDNELSPECLDGVQHVLDEETGICIPSSYISYVTPIMSPKLWSEARNMNDPNAFERQYVVLMNSFDFLAADDEFRFQSLWSFHHPNKDSEVYTKNLHNKRFASVRFQASSPGILHGFAGYFEATLYKDISLSIMPATMEAKSPDMFSWFPIYMPIKKPMYVPENSQLEFHMWRLTDGMRVWFEWCANAYLVLRNGSQIKLSSTEVHNISGKAFSCNMY.

The SAM-dependent MTase PRMT-type domain maps to leucine 280 to tryptophan 588. S-adenosyl-L-methionine is bound by residues tyrosine 296, lysine 305–tyrosine 306, glutamate 359, and aspartate 386–methionine 387. Residues glutamate 402 and glutamate 411 each act as proton donor/acceptor in the active site.

It belongs to the class I-like SAM-binding methyltransferase superfamily. Protein arginine N-methyltransferase family. As to quaternary structure, interacts with the N-terminal regulatory domain of shk1. Shk1, cdc42 and skb1 are able to form a ternary complex in vivo. Interacts with orb6. Interacts with Cdr1 and the Cdr1 inhibitory target Wee1.

The protein resides in the nucleus. Its subcellular location is the cell tip. It localises to the cell septum. It is found in the cytoplasm. The protein localises to the cell cortex. Functionally, S-adenosyl-L-methionine-dependent protein-arginine N-methyltransferase that can catalyze both the mono- and symmetric (type II) dimethylation of the guanidino nitrogens of arginine residues in target proteins. Delays mitotic entry by inhibiting the Cdr1-Wee1 signaling pathway. Cortical nodes sequester Skb1 from its regulatory targets Cdr1 and Wee1. Positively modulates the shk1 kinase function. May be a mediator of hyperosmotic stress response. Involved in the control of cell polarity by regulating the subcellular localization of Orb6 kinase. The chain is Protein arginine N-methyltransferase skb1 from Schizosaccharomyces pombe (strain 972 / ATCC 24843) (Fission yeast).